The chain runs to 565 residues: Effector protease OspD3 (565 aa).

The protein belongs to the Toxin_15 family.

The protein localises to the secreted. Its function is as follows. Effector protease that disrupts necroptosis in host cells by mediating proteolytic cleavage of host RIPK1 and RIPK3. The chain is Effector protease OspD3 from Shigella flexneri.